The following is a 200-amino-acid chain: Alpha-amylase/subtilisin inhibitor (200 aa).

A signal peptide spans 1–22; it reads MVSLRLPLILLSLLAISFSCSA. 2 cysteine pairs are disulfide-bonded: C63–C112 and C162–C166.

Belongs to the protease inhibitor I3 (leguminous Kunitz-type inhibitor) family.

Its function is as follows. This protein inhibits independently subtilisin and T.castaneum alpha-amylase but not barley alpha-amylase. This Oryza sativa subsp. japonica (Rice) protein is Alpha-amylase/subtilisin inhibitor (RASI).